The chain runs to 110 residues: Large ribosomal subunit protein eL30 (110 aa).

The protein belongs to the eukaryotic ribosomal protein eL30 family.

The sequence is that of Large ribosomal subunit protein eL30 (rpl30e) from Methanocaldococcus jannaschii (strain ATCC 43067 / DSM 2661 / JAL-1 / JCM 10045 / NBRC 100440) (Methanococcus jannaschii).